We begin with the raw amino-acid sequence, 395 residues long: Chalcone synthase (395 aa).

An N-acetylvaline modification is found at valine 2. Cysteine 169 is an active-site residue.

This sequence belongs to the thiolase-like superfamily. Chalcone/stilbene synthases family.

It carries out the reaction (E)-4-coumaroyl-CoA + 3 malonyl-CoA + 3 H(+) = 2',4,4',6'-tetrahydroxychalcone + 3 CO2 + 4 CoA. It participates in secondary metabolite biosynthesis; flavonoid biosynthesis. The primary product of this enzyme is 4,2',4',6'-tetrahydroxychalcone (also termed naringenin-chalcone or chalcone) which can under specific conditions spontaneously isomerize into naringenin. This chain is Chalcone synthase (CHS), found in Cardamine amara (Large bitter-cress).